We begin with the raw amino-acid sequence, 454 residues long: UPF0210 protein BAD_1323 (454 aa).

It belongs to the UPF0210 family. As to quaternary structure, homodimer.

The chain is UPF0210 protein BAD_1323 from Bifidobacterium adolescentis (strain ATCC 15703 / DSM 20083 / NCTC 11814 / E194a).